The sequence spans 161 residues: Phosphopantetheine adenylyltransferase (161 aa).

Ser-8 serves as a coordination point for substrate. ATP contacts are provided by residues 8–9 (SF) and His-16. Residues 36–40 (ENPRK), Leu-72, and Arg-86 each bind substrate. Residues 87-89 (GLR), Glu-97, and 122-128 (FSFISSS) each bind ATP. Residue Glu-132 participates in substrate binding.

It belongs to the bacterial CoaD family. In terms of assembly, homohexamer. Mg(2+) serves as cofactor.

The protein resides in the cytoplasm. It catalyses the reaction (R)-4'-phosphopantetheine + ATP + H(+) = 3'-dephospho-CoA + diphosphate. The protein operates within cofactor biosynthesis; coenzyme A biosynthesis; CoA from (R)-pantothenate: step 4/5. Functionally, reversibly transfers an adenylyl group from ATP to 4'-phosphopantetheine, yielding dephospho-CoA (dPCoA) and pyrophosphate. The sequence is that of Phosphopantetheine adenylyltransferase from Thermotoga maritima (strain ATCC 43589 / DSM 3109 / JCM 10099 / NBRC 100826 / MSB8).